We begin with the raw amino-acid sequence, 388 residues long: Chaperone protein DnaJ (388 aa).

Positions 4–69 constitute a J domain; the sequence is DYYDILGVDE…EKRQRYDQFG (66 aa). Basic and acidic residues-rich tracts occupy residues 27-50, 58-73, and 113-124; these read KAMEYHPDRNPDDPEAEQKFKEAS, DPEKRQRYDQFGHDGV, and GRSERGRGRPGS. Disordered stretches follow at residues 27-86 and 99-125; these read KAME…GRGR and SDIFGGAPGGGRGRGRSERGRGRPGSD. The CR-type zinc-finger motif lies at 140 to 225; the sequence is GTEKNLRLQK…CGGEGRVQGE (86 aa). Cys153, Cys156, Cys173, Cys176, Cys199, Cys202, Cys213, and Cys216 together coordinate Zn(2+). CXXCXGXG motif repeat units lie at residues 153-160, 173-180, 199-206, and 213-220; these read CESCDGTG, CPKCDGTG, CPRCEGEG, and CDDCGGEG. Positions 362–376 are enriched in basic and acidic residues; sequence AHDNFQPRPPEEDTQ. Positions 362–388 are disordered; it reads AHDNFQPRPPEEDTQKSFFRRVSDVFS.

Belongs to the DnaJ family. Homodimer. The cofactor is Zn(2+).

Its subcellular location is the cytoplasm. In terms of biological role, participates actively in the response to hyperosmotic and heat shock by preventing the aggregation of stress-denatured proteins and by disaggregating proteins, also in an autonomous, DnaK-independent fashion. Unfolded proteins bind initially to DnaJ; upon interaction with the DnaJ-bound protein, DnaK hydrolyzes its bound ATP, resulting in the formation of a stable complex. GrpE releases ADP from DnaK; ATP binding to DnaK triggers the release of the substrate protein, thus completing the reaction cycle. Several rounds of ATP-dependent interactions between DnaJ, DnaK and GrpE are required for fully efficient folding. Also involved, together with DnaK and GrpE, in the DNA replication of plasmids through activation of initiation proteins. This chain is Chaperone protein DnaJ, found in Salinibacter ruber (strain DSM 13855 / M31).